The following is a 353-amino-acid chain: Stachydrine N-demethylase reductase subunit Stc4 (353 aa).

An FAD-binding FR-type domain is found at 11 to 114; it reads SDAEPLECVT…IGPAGKFSIV (104 aa). Residues 269–353 enclose the 2Fe-2S ferredoxin-type domain; that stretch reads AEIAFALSGV…KPLRRVSVEA (85 aa). Residues cysteine 303, cysteine 308, cysteine 311, and cysteine 341 each contribute to the [2Fe-2S] cluster site.

It in the N-terminal section; belongs to the FAD-binding oxidoreductase type 6 family. In terms of assembly, the system is probably composed of an oxygenase subunit (Stc2) and two reductase subunits (Stc3 and Stc4). The cofactor is FAD. [2Fe-2S] cluster is required as a cofactor.

Its function is as follows. Reductase involved in the catabolism of stachydrine (L-proline betaine), a source of carbon and nitrogen. Part of a Rieske-type oxygenase system that catalyzes the demethylation of stachydrine to produce N-methyl-L-proline (monomethylproline). This subunit is probably involved in the transfer of electrons from NAD(P)H to the catalytic subunit Stc2. The protein is Stachydrine N-demethylase reductase subunit Stc4 of Rhizobium meliloti (strain 1021) (Ensifer meliloti).